A 1147-amino-acid chain; its full sequence is Sterol regulatory element-binding protein 1 (1147 aa).

Residues 1–60 form a transcriptional activation (acidic) region; sequence MDEPPFSEAALEQALGEPCDLDAALLTDIEDMLQLINNQDSDFPGLFDPPYAGSGAGGTD. At 1-487 the chain is on the cytoplasmic side; that stretch reads MDEPPFSEAA…HSRGMLDRSR (487 aa). Residues 27–35 carry the 9aaTAD motif; it reads TDIEDMLQL. The segment at 39–193 is disordered; it reads QDSDFPGLFD…PLPGLPLASP (155 aa). Composition is skewed to low complexity over residues 62 to 71 and 78 to 95; these read ASPDTSSPGS and TLSS…AAPS. Pro residues predominate over residues 96-105; that stretch reads PLSPPQPAPT. Phosphoserine is present on residues Ser-98 and Ser-117. Residues 170 to 190 are compositionally biased toward low complexity; the sequence is GGFSTGSPPGNTQQPLPGLPL. The interaction with LMNA stretch occupies residues 234-497; it reads QQVPVLLQPH…LALCTLVFLC (264 aa). Positions 323–373 constitute a bHLH domain; it reads EKRTAHNAIEKRYRSSINDKIIELKDLVVGTEAKLNKSAVLRKAIDYIRFL. A phosphoserine; by SIK1 mark is found at Ser-337 and Ser-338. The segment at 373–394 is leucine-zipper; the sequence is LQHSNQKLKQENLSLRTAVHKS. Ser-396 is subject to Phosphoserine; by AMPK. At Ser-402 the chain carries Phosphoserine; by SIK1. Residues 421–479 form a disordered region; sequence VEDTLTPPPSDAGSPFQSSPLSLGSRGSGSGGSGSDSEPDSPVFEDSKAKPEQRPSLHS. At Ser-457 the chain carries Phosphoserine. Residues 465-479 show a composition bias toward basic and acidic residues; it reads EDSKAKPEQRPSLHS. Residues 488-508 traverse the membrane as a helical segment; sequence LALCTLVFLCLSCNPLASLLG. Over 509–547 the chain is Lumenal; the sequence is ARGLPSPSDTTSVYHSPGRNVLGTESRDGPGWAQWLLPP. A helical transmembrane segment spans residues 548-568; that stretch reads VVWLLNGLLVLVSLVLLFVYG. Over 569–1147 the chain is Cytoplasmic; that stretch reads EPVTRPHSGP…LGGGTTVTSS (579 aa). Residue Ser-1060 is modified to Phosphoserine.

Belongs to the SREBP family. Forms a tight complex with SCAP, the SCAP-SREBP complex, in the endoplasmic reticulum membrane and the Golgi apparatus. Interacts with PAQR3; the interaction anchors the SCAP-SREBP complex to the Golgi apparatus in low cholesterol conditions. In terms of assembly, efficient DNA binding of the soluble transcription factor fragment requires dimerization with another bHLH protein. Interacts with CEBPA, the interaction produces a transcriptional synergy. Interacts with LMNA. Post-translationally, processed in the Golgi apparatus, releasing the protein from the membrane. At low cholesterol the SCAP-SREBP complex is recruited into COPII vesicles for export from the endoplasmic reticulum. In the Golgi, complex SREBPs are cleaved sequentially by site-1 (MBTPS1, S1P) and site-2 (MBTPS2, S2P) protease. The first cleavage by site-1 protease occurs within the luminal loop, the second cleavage by site-2 protease occurs within the first transmembrane domain, releasing the transcription factor from the Golgi membrane. In terms of processing, phosphorylated by AMPK, leading to suppress protein processing and nuclear translocation, and repress target gene expression. Phosphorylation at Ser-402 by SIK1 represses activity possibly by inhibiting DNA-binding. SCAP-free SREBF1 is ubiquitinated by the BCR(ARMC5) complex, leading to its degradation. Post-translationally, ubiquitinated; the nuclear form has a rapid turnover and is rapidly ubiquitinated and degraded by the proteasome in the nucleus. As to expression, expressed in a wide variety of tissues, most abundant in liver and adrenal gland. In fetal tissues lung and liver shows highest expression. In terms of tissue distribution, predominates in hepatoma cell lines. Also expressed in kidney, brain, white fat, and muscle. Predominantly expressed in liver and adipose tissues. Also expressed in kidney, brain, white fat, and muscle.

It localises to the endoplasmic reticulum membrane. The protein resides in the golgi apparatus membrane. It is found in the cytoplasmic vesicle. Its subcellular location is the COPII-coated vesicle membrane. The protein localises to the nucleus. Its activity is regulated as follows. Activation by cleavage is down-regulated upon activation of SIRT3-dependent PRKAA1/AMPK-alpha signaling cascade which leads to inhibition of ATP-consuming lipogenesis to restore cellular energy balance. Precursor of the transcription factor form (Processed sterol regulatory element-binding protein 1), which is embedded in the endoplasmic reticulum membrane. Low sterol concentrations promote processing of this form, releasing the transcription factor form that translocates into the nucleus and activates transcription of genes involved in cholesterol biosynthesis and lipid homeostasis. Its function is as follows. Key transcription factor that regulates expression of genes involved in cholesterol biosynthesis and lipid homeostasis. Binds to the sterol regulatory element 1 (SRE-1) (5'-ATCACCCCAC-3'). Has dual sequence specificity binding to both an E-box motif (5'-ATCACGTGA-3') and to SRE-1 (5'-ATCACCCCAC-3'). Regulates the promoters of genes involved in cholesterol biosynthesis and the LDL receptor (LDLR) pathway of sterol regulation. In terms of biological role, isoform expressed only in select tissues, which has higher transcriptional activity compared to SREBP-1C. Able to stimulate both lipogenic and cholesterogenic gene expression. Has a role in the nutritional regulation of fatty acids and triglycerides in lipogenic organs such as the liver. Required for innate immune response in macrophages by regulating lipid metabolism. Functionally, predominant isoform expressed in most tissues, which has weaker transcriptional activity compared to isoform SREBP-1A. Primarily controls expression of lipogenic gene. Strongly activates global lipid synthesis in rapidly growing cells. The absence of Golgi proteolytic processing requirement makes this isoform constitutively active in transactivation of lipogenic gene promoters. This is Sterol regulatory element-binding protein 1 from Homo sapiens (Human).